The sequence spans 612 residues: Mineralocorticoid receptor (612 aa).

Residues 1–228 are modulating; that stretch reads GNEIADSTVS…STGPSRPSKV (228 aa). The Zn(2+) site is built by cysteine 229, cysteine 232, cysteine 246, cysteine 249, cysteine 269, cysteine 275, cysteine 285, and cysteine 288. 2 NR C4-type zinc fingers span residues 229–249 and 269–293; these read CLVCGDEASGCHYGVVTCGSC and CAGRNDCIIDKIRRKNCPACRLQKC. Positions 229-298 form a DNA-binding region, nuclear receptor; it reads CLVCGDEASG…RLQKCLQAGM (70 aa). Positions 299–349 are hinge; the sequence is NLGARKSKKLGKLKGVHEEHPQQPLQQTPTASPKEDTTLTSSSKEPSANSN. Residues 310-348 are disordered; sequence KLKGVHEEHPQQPLQQTPTASPKEDTTLTSSSKEPSANS. Residues 339 to 348 are compositionally biased toward low complexity; the sequence is SSSKEPSANS. The NR LBD domain occupies 350–592; it reads SLVPLISAVS…EFPAMLVEII (243 aa). 2 residues coordinate 21-hydroxyprogesterone: asparagine 398 and glutamine 404. Aldosterone is bound by residues asparagine 398 and glutamine 404. Progesterone is bound by residues asparagine 398 and glutamine 404. An important for coactivator binding region spans residues 410-413; sequence KWAK. 21-hydroxyprogesterone contacts are provided by arginine 445 and threonine 573. Aldosterone is bound by residues arginine 445 and threonine 573. Arginine 445 and threonine 573 together coordinate progesterone.

Belongs to the nuclear hormone receptor family. NR3 subfamily.

Its subcellular location is the cytoplasm. It localises to the nucleus. Receptor for both mineralocorticoids (MC) such as aldosterone and glucocorticoids (GC) such as corticosterone or cortisol. Binds to mineralocorticoid response elements (MRE) and transactivates target genes. The effect of MC is to increase ion and water transport and thus raise extracellular fluid volume and blood pressure and lower potassium levels. The protein is Mineralocorticoid receptor (nr3c2) of Xenopus laevis (African clawed frog).